Consider the following 201-residue polypeptide: Retinol-binding protein 4 (201 aa).

Residues 1 to 18 (MEWVWALVLLAALGGGSA) form the signal peptide. 3 disulfides stabilise this stretch: cysteine 22/cysteine 178, cysteine 88/cysteine 192, and cysteine 138/cysteine 147. Residue glutamine 116 coordinates substrate. Position 139 is an omega-N-methylarginine (arginine 139).

Belongs to the calycin superfamily. Lipocalin family. In terms of assembly, interacts with TTR. Interaction with TTR prevents its loss by filtration through the kidney glomeruli. Interacts with STRA6. In terms of tissue distribution, detected in blood plasma (at protein level).

The protein resides in the secreted. Retinol-binding protein that mediates retinol transport in blood plasma. Delivers retinol from the liver stores to the peripheral tissues. Transfers the bound all-trans retinol to STRA6, that then facilitates retinol transport across the cell membrane. This is Retinol-binding protein 4 (Rbp4) from Rattus norvegicus (Rat).